The following is a 150-amino-acid chain: Ribonuclease pancreatic delta-type (150 aa).

The signal sequence occupies residues 1-25 (MGLEKSLILFSLLVLVLGWVQPSLG). R35 serves as a coordination point for substrate. The active-site Proton acceptor is H37. 4 disulfides stabilise this stretch: C51–C110, C65–C121, C83–C136, and C90–C98. Residues 66–70 (KRVNT), K91, and R111 each bind substrate. H145 serves as the catalytic Proton donor.

Belongs to the pancreatic ribonuclease family. As to quaternary structure, monomer.

It is found in the secreted. The enzyme catalyses an [RNA] containing cytidine + H2O = an [RNA]-3'-cytidine-3'-phosphate + a 5'-hydroxy-ribonucleotide-3'-[RNA].. It catalyses the reaction an [RNA] containing uridine + H2O = an [RNA]-3'-uridine-3'-phosphate + a 5'-hydroxy-ribonucleotide-3'-[RNA].. In terms of biological role, endonuclease that catalyzes the cleavage of RNA on the 3' side of pyrimidine nucleotides. Acts on single-stranded and double-stranded RNA. The chain is Ribonuclease pancreatic delta-type from Rattus exulans (Polynesian rat).